We begin with the raw amino-acid sequence, 190 residues long: MNPISLLFLALAMSTDAFAAALGKGASLHKPRFLEALRTGLIFGAIETITPVIGWGIGQVAARFAESWDHWIAFTLLLVLGLHMIYNGIKHDDDEEQEKPGQHSFWILAVTAFATSIDALAVGVGLAFVDVNIVVAALAIGLATTVMVTIGVMLGRVLGTMVGKRAEIIGGIVLIVVGATILYEHLSAAQ.

The next 6 membrane-spanning stretches (helical) occupy residues 3–23, 41–61, 69–89, 105–125, 133–153, and 168–188; these read PISL…AALG, LIFG…GQVA, DHWI…YNGI, FWIL…VGVG, IVVA…IGVM, and IIGG…HLSA.

The protein belongs to the MntP (TC 9.B.29) family.

The protein localises to the cell inner membrane. In terms of biological role, probably functions as a manganese efflux pump. This is Putative manganese efflux pump MntP from Pseudomonas syringae pv. syringae (strain B728a).